The following is a 180-amino-acid chain: 3-deoxy-D-manno-octulosonate 8-phosphate phosphatase KdsC (180 aa).

Residues Asp-14 and Asp-16 each coordinate Mg(2+). Residues Asp-16, His-37–Gly-41, Lys-45, Arg-60, Arg-68, and Lys-84 contribute to the substrate site. Asp-107 contributes to the Mg(2+) binding site.

It belongs to the KdsC family. Homotetramer. Mg(2+) is required as a cofactor.

It carries out the reaction 3-deoxy-alpha-D-manno-2-octulosonate-8-phosphate + H2O = 3-deoxy-alpha-D-manno-oct-2-ulosonate + phosphate. Its function is as follows. Catalyzes the hydrolysis of 3-deoxy-D-manno-octulosonate 8-phosphate (KDO 8-P) to 3-deoxy-D-manno-octulosonate (KDO) and inorganic phosphate. This is 3-deoxy-D-manno-octulosonate 8-phosphate phosphatase KdsC from Haemophilus influenzae (strain ATCC 51907 / DSM 11121 / KW20 / Rd).